The chain runs to 491 residues: Probable G-protein coupled receptor Mth-like 7 (491 aa).

An N-terminal signal peptide occupies residues 1 to 22; that stretch reads MRLPWVIFCTVLLLIFTNNSNA. Residues Asn-18 and Asn-42 are each glycosylated (N-linked (GlcNAc...) asparagine). Over 23–167 the chain is Extracellular; sequence DIPGCNYYDT…EEVSIQIFNK (145 aa). 3 disulfide bridges follow: Cys-27–Cys-80, Cys-82–Cys-87, and Cys-92–Cys-103. The chain crosses the membrane as a helical span at residues 168–188; sequence CGLIVWFQDGKFWVTVDLFME. The Cytoplasmic portion of the chain corresponds to 189-222; it reads KQDYCLYRHNFDSDFPKSMWIIRHRCTSHISPGS. The helical transmembrane segment at 223-243 threads the bilayer; it reads LEILIITMICFVLTIAVYLYI. At 244–252 the chain is on the extracellular side; that stretch reads KKLRNVTGK. A glycan (N-linked (GlcNAc...) asparagine) is linked at Asn-248. Residues 253-273 form a helical membrane-spanning segment; sequence CIVCCIVSRFIQCLIMILDHL. The Cytoplasmic segment spans residues 274 to 325; it reads NLLNGICSPAGYSSHFFRMASNLWLSVISYHTWKVLTSLNRVDPNYRFLRYN. Residues 326-346 traverse the membrane as a helical segment; sequence AFVWSTAAIMTGSIYIVNQIW. At 347–372 the chain is on the extracellular side; it reads ENDPSKWNWLPLVGFIRCSVKDWHPS. The chain crosses the membrane as a helical span at residues 373-393; the sequence is VWIYISGPSLALSTFNVAMFA. Residues 394–434 lie on the Cytoplasmic side of the membrane; it reads LTAIYIRKVKGGINKFTNEEEGRINCINFDSQTYLQFLRLS. Residues 435-455 traverse the membrane as a helical segment; that stretch reads IVMGLTWIFNVIPYSARLHIF. Topologically, residues 456-458 are extracellular; that stretch reads WEW. The chain crosses the membrane as a helical span at residues 459 to 479; it reads VGIISEYFHSAFGIVLFVLLV. Topologically, residues 480–491 are cytoplasmic; that stretch reads LKRSTWTLMMDS.

This sequence belongs to the G-protein coupled receptor 2 family. Mth subfamily.

It is found in the cell membrane. This chain is Probable G-protein coupled receptor Mth-like 7 (mthl7), found in Drosophila melanogaster (Fruit fly).